Here is a 550-residue protein sequence, read N- to C-terminus: Tyrosinase HcTyr2 (550 aa).

Residues His-56, His-84, His-93, His-282, His-286, and His-326 each coordinate Cu cation.

It belongs to the tyrosinase family. Cu(2+) is required as a cofactor.

It catalyses the reaction L-tyrosine + O2 = L-dopaquinone + H2O. The enzyme catalyses 2 L-tyrosine + O2 = 2 L-dopa. The catalysed reaction is 2 L-dopa + O2 = 2 L-dopaquinone + 2 H2O. Functionally, copper-containing oxidase that catalyzes the conversion of L-tyrosine to L-dopa and then to L-dopaquinone. Can use various phenols such as p-coumaric acid, phenol, pyrocatechol, syringol or pyrogallol. Accepts several of the constituents of lignin and potentially participates in lignin functionalization. This chain is Tyrosinase HcTyr2, found in Hahella sp. (strain CCB-MM4).